We begin with the raw amino-acid sequence, 1398 residues long: DNA-directed RNA polymerase subunit beta' (1398 aa).

Zn(2+) contacts are provided by Cys-71, Cys-73, Cys-86, and Cys-89. Positions 462, 464, and 466 each coordinate Mg(2+). Zn(2+)-binding residues include Cys-810, Cys-883, Cys-890, and Cys-893. Residues 1377 to 1398 (EKQAAVVSPAPEAELPALPPAE) are disordered. Over residues 1380 to 1392 (AAVVSPAPEAELP) the composition is skewed to low complexity.

The protein belongs to the RNA polymerase beta' chain family. In terms of assembly, the RNAP catalytic core consists of 2 alpha, 1 beta, 1 beta' and 1 omega subunit. When a sigma factor is associated with the core the holoenzyme is formed, which can initiate transcription. Mg(2+) serves as cofactor. It depends on Zn(2+) as a cofactor.

It carries out the reaction RNA(n) + a ribonucleoside 5'-triphosphate = RNA(n+1) + diphosphate. In terms of biological role, DNA-dependent RNA polymerase catalyzes the transcription of DNA into RNA using the four ribonucleoside triphosphates as substrates. This is DNA-directed RNA polymerase subunit beta' from Bradyrhizobium diazoefficiens (strain JCM 10833 / BCRC 13528 / IAM 13628 / NBRC 14792 / USDA 110).